The chain runs to 493 residues: MERAEEPVVYQKLLPWEPSLESEEEVEEEETSEALVLNPRRHQDSSRNKAGGLPGTWARVVAALLLLAVGCSLAVRQLQNQGRSTGSLGSVAPPPGGHSHGPGVYHHGAIISPAGRELLVAGGNVVDAGVGAALCLAVVHPHATGLGAMFWGLFHDSSSGNSTALTSGPAQTLAPGLGLPAALPTLHLLHARFGRLPWPRLLVGPTTLAQEGFLVDTPLARALVARGTEGLCPLLCHADGTPLGAGARATNPQLAAVLRSAALAPTSDLAGDALLSLLAGDLGVEVPSAVPRPTLEPAEQLPVPQGILFTTPSPSAGPELLALLEAALRSGAPIPDPCPPFLQTAVSPESSALAAVDSSGSVLLLTSSLNCSFGSAHLSPSTGVLLSNLVAKSTTSAWACPLILRGSLDDTEADVLGLVASGTPDVARAMTHTLLRHLAARPPTQAQHQHQGQQEPTEHPSTCGQGTLLQVAAHTEHAHVSSVPHACCPFQGF.

The Cytoplasmic segment spans residues 1 to 54 (MERAEEPVVYQKLLPWEPSLESEEEVEEEETSEALVLNPRRHQDSSRNKAGGLP). Positions 19-52 (SLESEEEVEEEETSEALVLNPRRHQDSSRNKAGG) are disordered. Residues 20–32 (LESEEEVEEEETS) show a composition bias toward acidic residues. The helical; Signal-anchor for type II membrane protein transmembrane segment at 55-75 (GTWARVVAALLLLAVGCSLAV) threads the bilayer. At 76–493 (RQLQNQGRST…PHACCPFQGF (418 aa)) the chain is on the extracellular side. The disordered stretch occupies residues 83–105 (RSTGSLGSVAPPPGGHSHGPGVY). Residues Asn-161 and Asn-370 are each glycosylated (N-linked (GlcNAc...) asparagine). The segment covering 442–455 (PPTQAQHQHQGQQE) has biased composition (low complexity). A disordered region spans residues 442–464 (PPTQAQHQHQGQQEPTEHPSTCG).

It belongs to the gamma-glutamyltransferase family. Heterodimer composed of the light and heavy chains. The active site is located in the light chain. Cleaved by autocatalysis into a large and a small subunit and the autocatalytic cleavage is essential to the functional activation of the enzyme.

It is found in the membrane. It catalyses the reaction an N-terminal (5-L-glutamyl)-[peptide] + an alpha-amino acid = 5-L-glutamyl amino acid + an N-terminal L-alpha-aminoacyl-[peptide]. The catalysed reaction is glutathione + H2O = L-cysteinylglycine + L-glutamate. The enzyme catalyses an S-substituted glutathione + H2O = an S-substituted L-cysteinylglycine + L-glutamate. It functions in the pathway sulfur metabolism; glutathione metabolism. Functionally, hydrolyzes and transfers gamma-glutamyl moieties from glutathione and other gamma-glutamyl compounds to acceptors. The chain is Glutathione hydrolase 6 from Homo sapiens (Human).